The chain runs to 290 residues: Ribosomal RNA small subunit methyltransferase A (290 aa).

N27, L29, G54, E75, D100, and N125 together coordinate S-adenosyl-L-methionine.

Belongs to the class I-like SAM-binding methyltransferase superfamily. rRNA adenine N(6)-methyltransferase family. RsmA subfamily.

The protein resides in the cytoplasm. It carries out the reaction adenosine(1518)/adenosine(1519) in 16S rRNA + 4 S-adenosyl-L-methionine = N(6)-dimethyladenosine(1518)/N(6)-dimethyladenosine(1519) in 16S rRNA + 4 S-adenosyl-L-homocysteine + 4 H(+). Specifically dimethylates two adjacent adenosines (A1518 and A1519) in the loop of a conserved hairpin near the 3'-end of 16S rRNA in the 30S particle. May play a critical role in biogenesis of 30S subunits. The sequence is that of Ribosomal RNA small subunit methyltransferase A from Streptococcus pyogenes serotype M18 (strain MGAS8232).